The following is a 503-amino-acid chain: ATP synthase subunit beta (503 aa).

Residue 157–164 (GGAGVGKT) participates in ATP binding.

The protein belongs to the ATPase alpha/beta chains family. F-type ATPases have 2 components, CF(1) - the catalytic core - and CF(0) - the membrane proton channel. CF(1) has five subunits: alpha(3), beta(3), gamma(1), delta(1), epsilon(1). CF(0) has three main subunits: a(1), b(2) and c(9-12). The alpha and beta chains form an alternating ring which encloses part of the gamma chain. CF(1) is attached to CF(0) by a central stalk formed by the gamma and epsilon chains, while a peripheral stalk is formed by the delta and b chains.

Its subcellular location is the cell membrane. It catalyses the reaction ATP + H2O + 4 H(+)(in) = ADP + phosphate + 5 H(+)(out). Functionally, produces ATP from ADP in the presence of a proton gradient across the membrane. The catalytic sites are hosted primarily by the beta subunits. The sequence is that of ATP synthase subunit beta from Christiangramia forsetii (strain DSM 17595 / CGMCC 1.15422 / KT0803) (Gramella forsetii).